The chain runs to 124 residues: Outer dense fiber protein 2 (124 aa).

Positions 13 to 124 form a coiled coil; that stretch reads KEDSERLMEQ…EAIMEQLKEL (112 aa).

The protein belongs to the ODF2 family. Self-associates. Associates with microtubules and forms a fibrillar structure partially linked to the microtubule network. Interacts through its C-terminus with PLK1. Interacts with ODF1. Interacts with MARK4; the interaction is required for localization of ODF2 to centrioles. Interacts with TSSK4. Interacts with AKNA. Interacts with QRICH2. Interacts with CFAP58. Interacts with BBOF1. Interacts with CCDC38. Interacts with CCDC42. In terms of processing, tyrosine phosphorylated. Detected in sperm flagella (at protein level).

It is found in the cytoplasm. The protein localises to the cytoskeleton. The protein resides in the microtubule organizing center. It localises to the centrosome. Its subcellular location is the cell projection. It is found in the cilium. The protein localises to the centriole. The protein resides in the spindle pole. It localises to the flagellum. Seems to be a major component of sperm tail outer dense fibers (ODF). ODFs are filamentous structures located on the outside of the axoneme in the midpiece and principal piece of the mammalian sperm tail and may help to maintain the passive elastic structures and elastic recoil of the sperm tail. May have a modulating influence on sperm motility. Functions as a general scaffold protein that is specifically localized at the distal/subdistal appendages of mother centrioles. Component of the centrosome matrix required for the localization of PLK1 and NIN to the centrosomes. Required for the formation and/or maintenance of normal CETN1 assembly. The sequence is that of Outer dense fiber protein 2 from Mesocricetus auratus (Golden hamster).